Here is a 416-residue protein sequence, read N- to C-terminus: Gamma-glutamyl phosphate reductase (416 aa).

The protein belongs to the gamma-glutamyl phosphate reductase family.

It is found in the cytoplasm. The enzyme catalyses L-glutamate 5-semialdehyde + phosphate + NADP(+) = L-glutamyl 5-phosphate + NADPH + H(+). It participates in amino-acid biosynthesis; L-proline biosynthesis; L-glutamate 5-semialdehyde from L-glutamate: step 2/2. Functionally, catalyzes the NADPH-dependent reduction of L-glutamate 5-phosphate into L-glutamate 5-semialdehyde and phosphate. The product spontaneously undergoes cyclization to form 1-pyrroline-5-carboxylate. This chain is Gamma-glutamyl phosphate reductase, found in Streptococcus thermophilus (strain ATCC BAA-491 / LMD-9).